The following is a 252-amino-acid chain: Chaperone protein AggD (252 aa).

The first 22 residues, 1-22 (MKIRRIVSTIAIALSVFTFAHA), serve as a signal peptide directing secretion.

The protein belongs to the periplasmic pilus chaperone family.

Its subcellular location is the periplasm. Functionally, involved in the biogenesis of the AAF/I fimbriae. The protein is Chaperone protein AggD (aggD) of Escherichia coli.